Here is a 294-residue protein sequence, read N- to C-terminus: Nucleotide-binding protein CLB_3433 (294 aa).

An ATP-binding site is contributed by 8 to 15 (GLSGAGKT). Residue 59-62 (DIRG) participates in GTP binding.

This sequence belongs to the RapZ-like family.

Displays ATPase and GTPase activities. The protein is Nucleotide-binding protein CLB_3433 of Clostridium botulinum (strain ATCC 19397 / Type A).